We begin with the raw amino-acid sequence, 257 residues long: MAAAAGRLLWSSVARPASTIFRSISASTVLRPVASRRTCLTDMLWSACPQAKFAFSTSSSFHTPAVTQHAPHFKGTAVVNGEFKELSLDDFKGKYLVLFFYPLDFTFVCPTEIVAFSDKANEFHDVNCEVVAVSVDSHFSHLAWINTPRKNGGLGHMNITLLSDLTKQISRDYGVLLESAGIALRGLFIIDPNGVIKHLSVNDLPVGRSVEEPLRLVKAFQFVETHGEVCPANWTPESPTIKPSPTASKEYFEKVHQ.

Residues 1 to 62 constitute a mitochondrion transit peptide; that stretch reads MAAAAGRLLW…FAFSTSSSFH (62 aa). The region spanning 64–222 is the Thioredoxin domain; it reads PAVTQHAPHF…PLRLVKAFQF (159 aa). Lys-84 carries the N6-succinyllysine modification. Residue Lys-92 is modified to N6-acetyllysine; alternate. An N6-succinyllysine; alternate modification is found at Lys-92. Catalysis depends on Cys-109, which acts as the Cysteine sulfenic acid (-SOH) intermediate. The residue at position 147 (Thr-147) is a Phosphothreonine.

Belongs to the peroxiredoxin family. AhpC/Prx1 subfamily. Homodimer; disulfide-linked, upon oxidation. 6 homodimers assemble to form a ring-like dodecamer. Interacts with NEK6. Interacts with LRRK2. Interacts with MAP3K13. Interacts with RPS6KC1 (via PX domain). Phosphorylated by LRRK2; phosphorylation reduces perodixase activity. Post-translationally, the enzyme can be inactivated by further oxidation of the cysteine sulfenic acid (C(P)-SOH) to sulphinic acid (C(P)-SO2H) and sulphonic acid (C(P)-SO3H) instead of its condensation to a disulfide bond. In terms of processing, S-palmitoylated. Ubiquitous.

It is found in the mitochondrion. Its subcellular location is the cytoplasm. The protein resides in the early endosome. The enzyme catalyses a hydroperoxide + [thioredoxin]-dithiol = an alcohol + [thioredoxin]-disulfide + H2O. Its function is as follows. Thiol-specific peroxidase that catalyzes the reduction of hydrogen peroxide and organic hydroperoxides to water and alcohols, respectively. Plays a role in cell protection against oxidative stress by detoxifying peroxides. Acts synergistically with MAP3K13 to regulate the activation of NF-kappa-B in the cytosol. Required for the maintenance of physical strength. The protein is Thioredoxin-dependent peroxide reductase, mitochondrial (Prdx3) of Rattus norvegicus (Rat).